The chain runs to 366 residues: Tetraacyldisaccharide 4'-kinase (366 aa).

62 to 69 contributes to the ATP binding site; that stretch reads RVGGTGKT.

This sequence belongs to the LpxK family.

The enzyme catalyses a lipid A disaccharide + ATP = a lipid IVA + ADP + H(+). The protein operates within glycolipid biosynthesis; lipid IV(A) biosynthesis; lipid IV(A) from (3R)-3-hydroxytetradecanoyl-[acyl-carrier-protein] and UDP-N-acetyl-alpha-D-glucosamine: step 6/6. Its function is as follows. Transfers the gamma-phosphate of ATP to the 4'-position of a tetraacyldisaccharide 1-phosphate intermediate (termed DS-1-P) to form tetraacyldisaccharide 1,4'-bis-phosphate (lipid IVA). The protein is Tetraacyldisaccharide 4'-kinase of Polynucleobacter necessarius subsp. necessarius (strain STIR1).